The following is a 559-amino-acid chain: 5'-AMP-activated protein kinase catalytic subunit alpha-1 (559 aa).

The Protein kinase domain maps to 27–279; that stretch reads YILGDTLGVG…IKDIREHEWF (253 aa). A Phosphothreonine modification is found at Thr32. ATP contacts are provided by residues 33-41 and Lys56; that span reads LGVGTFGKV. Catalysis depends on Asp150, which acts as the Proton acceptor. Residue Thr183 is modified to Phosphothreonine; by LKB1 and CaMKK2. Phosphothreonine occurs at positions 269 and 355. Positions 302–381 are AIS; that stretch reads EALKEVCEKF…PERVPFLVAE (80 aa). Ser356 carries the phosphoserine modification. Ser360 is subject to Phosphoserine; by ULK1. A Phosphothreonine; by ULK1 modification is found at Thr368. Phosphothreonine is present on Thr382. Residues Ser397, Ser467, and Ser486 each carry the phosphoserine modification. Over residues 485-505 the composition is skewed to polar residues; it reads KSGTATPQRSGSVSNYRSCQR. Residues 485–536 form a disordered region; it reads KSGTATPQRSGSVSNYRSCQRSDSDAEAQGKSSEVSLTSSVTSLDSSPVDLT. Phosphothreonine is present on residues Thr488 and Thr490. A phosphoserine mark is found at Ser496, Ser508, Ser524, and Ser527. Over residues 516–535 the composition is skewed to low complexity; the sequence is SSEVSLTSSVTSLDSSPVDL.

The protein belongs to the protein kinase superfamily. CAMK Ser/Thr protein kinase family. SNF1 subfamily. In terms of assembly, AMPK is a heterotrimer of an alpha catalytic subunit (PRKAA1 or PRKAA2), a beta (PRKAB1 or PRKAB2) and a gamma non-catalytic subunits (PRKAG1, PRKAG2 or PRKAG3). Interacts with FNIP1 and FNIP2. (Microbial infection) Interacts with Dengue type 2 virus non-structural protein 1; this interaction promotes the AMPK/ERK/mTOR signaling pathway to induce autophagy. The cofactor is Mg(2+). In terms of processing, ubiquitinated. Post-translationally, phosphorylated at Thr-183 by STK11/LKB1 in complex with STE20-related adapter-alpha (STRADA) pseudo kinase and CAB39. Also phosphorylated at Thr-183 by CAMKK2; triggered by a rise in intracellular calcium ions, without detectable changes in the AMP/ATP ratio. CAMKK1 can also phosphorylate Thr-183, but at a much lower level. Dephosphorylated by protein phosphatase 2A and 2C (PP2A and PP2C). Phosphorylated by ULK1 and ULK2; leading to negatively regulate AMPK activity and suggesting the existence of a regulatory feedback loop between ULK1, ULK2 and AMPK. Dephosphorylated by PPM1A and PPM1B. Glycosylated; O-GlcNAcylated by OGT, promoting the AMP-activated protein kinase (AMPK) activity.

The protein resides in the cytoplasm. The protein localises to the nucleus. It catalyses the reaction L-seryl-[protein] + ATP = O-phospho-L-seryl-[protein] + ADP + H(+). It carries out the reaction L-threonyl-[protein] + ATP = O-phospho-L-threonyl-[protein] + ADP + H(+). The enzyme catalyses L-seryl-[acetyl-CoA carboxylase] + ATP = O-phospho-L-seryl-[acetyl-CoA carboxylase] + ADP + H(+). The catalysed reaction is L-seryl-[3-hydroxy-3-methylglutaryl-coenzyme A reductase] + ATP = O-phospho-L-seryl-[3-hydroxy-3-methylglutaryl-coenzyme A reductase] + ADP + H(+). It catalyses the reaction L-seryl-[tau protein] + ATP = O-phospho-L-seryl-[tau protein] + ADP + H(+). It carries out the reaction L-threonyl-[tau protein] + ATP = O-phospho-L-threonyl-[tau protein] + ADP + H(+). Activated by phosphorylation on Thr-183. Binding of AMP to non-catalytic gamma subunit (PRKAG1, PRKAG2 or PRKAG3) results in allosteric activation, inducing phosphorylation on Thr-183. AMP-binding to gamma subunit also sustains activity by preventing dephosphorylation of Thr-183. ADP also stimulates Thr-183 phosphorylation, without stimulating already phosphorylated AMPK. ATP promotes dephosphorylation of Thr-183, rendering the enzyme inactive. Under physiological conditions AMPK mainly exists in its inactive form in complex with ATP, which is much more abundant than AMP. AMPK is activated by antihyperglycemic drug metformin, a drug prescribed to patients with type 2 diabetes: in vivo, metformin seems to mainly inhibit liver gluconeogenesis. However, metformin can be used to activate AMPK in muscle and other cells in culture or ex vivo. Selectively inhibited by compound C (6-[4-(2-Piperidin-1-yl-ethoxy)-phenyl)]-3-pyridin-4-yl-pyyrazolo[1,5-a] pyrimidine. Activated by resveratrol, a natural polyphenol present in red wine, and S17834, a synthetic polyphenol. In terms of biological role, catalytic subunit of AMP-activated protein kinase (AMPK), an energy sensor protein kinase that plays a key role in regulating cellular energy metabolism. In response to reduction of intracellular ATP levels, AMPK activates energy-producing pathways and inhibits energy-consuming processes: inhibits protein, carbohydrate and lipid biosynthesis, as well as cell growth and proliferation. AMPK acts via direct phosphorylation of metabolic enzymes, and by longer-term effects via phosphorylation of transcription regulators. Regulates lipid synthesis by phosphorylating and inactivating lipid metabolic enzymes such as ACACA, ACACB, GYS1, HMGCR and LIPE; regulates fatty acid and cholesterol synthesis by phosphorylating acetyl-CoA carboxylase (ACACA and ACACB) and hormone-sensitive lipase (LIPE) enzymes, respectively. Promotes lipolysis of lipid droplets by mediating phosphorylation of isoform 1 of CHKA (CHKalpha2). Regulates insulin-signaling and glycolysis by phosphorylating IRS1, PFKFB2 and PFKFB3. AMPK stimulates glucose uptake in muscle by increasing the translocation of the glucose transporter SLC2A4/GLUT4 to the plasma membrane, possibly by mediating phosphorylation of TBC1D4/AS160. Regulates transcription and chromatin structure by phosphorylating transcription regulators involved in energy metabolism such as CRTC2/TORC2, FOXO3, histone H2B, HDAC5, MEF2C, MLXIPL/ChREBP, EP300, HNF4A, p53/TP53, SREBF1, SREBF2 and PPARGC1A. Acts as a key regulator of glucose homeostasis in liver by phosphorylating CRTC2/TORC2, leading to CRTC2/TORC2 sequestration in the cytoplasm. In response to stress, phosphorylates 'Ser-36' of histone H2B (H2BS36ph), leading to promote transcription. Acts as a key regulator of cell growth and proliferation by phosphorylating FNIP1, TSC2, RPTOR, WDR24 and ATG1/ULK1: in response to nutrient limitation, negatively regulates the mTORC1 complex by phosphorylating RPTOR component of the mTORC1 complex and by phosphorylating and activating TSC2. Also phosphorylates and inhibits GATOR2 subunit WDR24 in response to nutrient limitation, leading to suppress glucose-mediated mTORC1 activation. In response to energetic stress, phosphorylates FNIP1, inactivating the non-canonical mTORC1 signaling, thereby promoting nuclear translocation of TFEB and TFE3, and inducing transcription of lysosomal or autophagy genes. In response to nutrient limitation, promotes autophagy by phosphorylating and activating ATG1/ULK1. In that process, it also activates WDR45/WIPI4. Phosphorylates CASP6, thereby preventing its autoprocessing and subsequent activation. In response to nutrient limitation, phosphorylates transcription factor FOXO3 promoting FOXO3 mitochondrial import. Also acts as a regulator of cellular polarity by remodeling the actin cytoskeleton; probably by indirectly activating myosin. AMPK also acts as a regulator of circadian rhythm by mediating phosphorylation of CRY1, leading to destabilize it. May regulate the Wnt signaling pathway by phosphorylating CTNNB1, leading to stabilize it. Also has tau-protein kinase activity: in response to amyloid beta A4 protein (APP) exposure, activated by CAMKK2, leading to phosphorylation of MAPT/TAU; however the relevance of such data remains unclear in vivo. Also phosphorylates CFTR, EEF2K, KLC1, NOS3 and SLC12A1. Regulates hepatic lipogenesis. Activated via SIRT3, represses sterol regulatory element-binding protein (SREBP) transcriptional activities and ATP-consuming lipogenesis to restore cellular energy balance. Upon stress, regulates mitochondrial fragmentation through phosphorylation of MTFR1L. In Homo sapiens (Human), this protein is 5'-AMP-activated protein kinase catalytic subunit alpha-1.